Consider the following 975-residue polypeptide: Leucine-zipper-like transcriptional regulator 1 homolog (975 aa).

Residues 16–32 (RGGGGGGCGGGGAGGSA) are compositionally biased toward gly residues. Disordered regions lie at residues 16 to 41 (RGGG…TSGS) and 158 to 186 (MSSS…SCSS). The span at 174-186 (ASSSHPPGSSCSS) shows a compositional bias: low complexity. Kelch repeat units lie at residues 263–312 (AMFV…VAGS), 314–369 (MFIF…VYDN), 370–417 (KMWI…PVAV), 421–467 (AMYV…PSRR), 478–524 (FLYV…FHAS), and 530–581 (AMYI…FIVG). BTB domains lie at 574-670 (CDIQ…DLKD) and 801-870 (CDIS…KMPP).

The protein belongs to the LZTR1 family. As to quaternary structure, component of some BCR (BTB-CUL3-RBX1) E3 ubiquitin-protein ligase complex. Expressed in Rdl-expressing neurons of the mushroom body, the neurons projecting to the LC9 optic glomerulus and in a neuronal cluster near the subesophageal ganglion (at protein level).

The protein operates within protein modification; protein ubiquitination. Its function is as follows. Inhibitor of Ras signaling. Acts as a substrate-specific adapter of a BCR (BTB-CUL3-RBX1) E3 ubiquitin-protein ligase complex that mediates ubiquitination of Ras. Together with Nf1, plays an important role for normal sleep behavior, mainly during the night. Might affect sleep by modulating GABA signaling in Rdl-expressing neurons. Might play a role in the regulation of brain glycogen metabolism and organismal levels of triglycerides. In Drosophila melanogaster (Fruit fly), this protein is Leucine-zipper-like transcriptional regulator 1 homolog.